The primary structure comprises 450 residues: tRNA-aminoacylation cofactor arc1 (450 aa).

Positions Gln-208–Val-278 are disordered. Basic and acidic residues-rich tracts occupy residues Ile-213–Pro-225 and Ser-233–Glu-247. A compositionally biased stretch (basic residues) spans Lys-248 to Lys-261. Residues Asp-262–Pro-272 are compositionally biased toward basic and acidic residues. Residues Val-278–Thr-382 enclose the tRNA-binding domain.

Belongs to the tRNA-aminoacylation cofactor ARC1 family. As to quaternary structure, component of a yeast aminoacyl-tRNA synthase (aaRS) complex formed by methionyl-tRNA synthase, glutamyl-tRNA synthase and the tRNA aminoacylation cofactor arc1 in a stoichiometric complex. Interacts with rar1/mes1 and gus1.

Its subcellular location is the cytoplasm. Functionally, binds to tRNA and functions as a cofactor for the methionyl-tRNA synthetase (MetRS) and glutamyl-tRNA synthetase (GluRS). Forms a complex with MetRS and GluRS and increases their affinity for cognate tRNAs due to the presence of a tRNA binding domain in its middle and C-terminal part. In Schizosaccharomyces pombe (strain 972 / ATCC 24843) (Fission yeast), this protein is tRNA-aminoacylation cofactor arc1.